The chain runs to 254 residues: Imidazole glycerol phosphate synthase subunit HisF (254 aa).

Catalysis depends on residues D11 and D130.

It belongs to the HisA/HisF family. In terms of assembly, heterodimer of HisH and HisF.

It is found in the cytoplasm. The enzyme catalyses 5-[(5-phospho-1-deoxy-D-ribulos-1-ylimino)methylamino]-1-(5-phospho-beta-D-ribosyl)imidazole-4-carboxamide + L-glutamine = D-erythro-1-(imidazol-4-yl)glycerol 3-phosphate + 5-amino-1-(5-phospho-beta-D-ribosyl)imidazole-4-carboxamide + L-glutamate + H(+). Its pathway is amino-acid biosynthesis; L-histidine biosynthesis; L-histidine from 5-phospho-alpha-D-ribose 1-diphosphate: step 5/9. Its function is as follows. IGPS catalyzes the conversion of PRFAR and glutamine to IGP, AICAR and glutamate. The HisF subunit catalyzes the cyclization activity that produces IGP and AICAR from PRFAR using the ammonia provided by the HisH subunit. In Microcystis aeruginosa (strain NIES-843 / IAM M-2473), this protein is Imidazole glycerol phosphate synthase subunit HisF.